A 561-amino-acid polypeptide reads, in one-letter code: Urocanate hydratase (561 aa).

Residues 52-53 (GG), Gln130, 176-178 (GMG), Glu196, Arg201, 242-243 (NA), 263-267 (QTSAH), 273-274 (YL), and Tyr322 contribute to the NAD(+) site. Cys410 is a catalytic residue. Gly492 provides a ligand contact to NAD(+).

Belongs to the urocanase family. NAD(+) serves as cofactor.

The protein localises to the cytoplasm. It carries out the reaction 4-imidazolone-5-propanoate = trans-urocanate + H2O. It participates in amino-acid degradation; L-histidine degradation into L-glutamate; N-formimidoyl-L-glutamate from L-histidine: step 2/3. Catalyzes the conversion of urocanate to 4-imidazolone-5-propionate. This chain is Urocanate hydratase, found in Enterobacter sp. (strain 638).